We begin with the raw amino-acid sequence, 741 residues long: Penicillin-binding protein 1B (741 aa).

Over 1–12 the chain is Cytoplasmic; that stretch reads MYPVNLKLSIKF. A helical; Signal-anchor for type II membrane protein membrane pass occupies residues 13-33; sequence LFYFFLYFLLIIIIYGVYLYF. The Extracellular segment spans residues 34–741; sequence KINQVIHGKI…WIRNHNIFCT (708 aa). The segment at 139–311 is transglycosylase; the sequence is LRLDPQLIAM…SLYNPWNNPV (173 aa). Glu-177 serves as the catalytic Proton donor; for transglycosylase activity. Residues 395-687 form a transpeptidase region; it reads ENAIRHGIQQ…STGAMKIYHN (293 aa). Ser-454 serves as the catalytic Acyl-ester intermediate; for transpeptidase activity.

This sequence in the N-terminal section; belongs to the glycosyltransferase 51 family. In the C-terminal section; belongs to the transpeptidase family.

The protein resides in the cell membrane. It carries out the reaction [GlcNAc-(1-&gt;4)-Mur2Ac(oyl-L-Ala-gamma-D-Glu-L-Lys-D-Ala-D-Ala)](n)-di-trans,octa-cis-undecaprenyl diphosphate + beta-D-GlcNAc-(1-&gt;4)-Mur2Ac(oyl-L-Ala-gamma-D-Glu-L-Lys-D-Ala-D-Ala)-di-trans,octa-cis-undecaprenyl diphosphate = [GlcNAc-(1-&gt;4)-Mur2Ac(oyl-L-Ala-gamma-D-Glu-L-Lys-D-Ala-D-Ala)](n+1)-di-trans,octa-cis-undecaprenyl diphosphate + di-trans,octa-cis-undecaprenyl diphosphate + H(+). It catalyses the reaction Preferential cleavage: (Ac)2-L-Lys-D-Ala-|-D-Ala. Also transpeptidation of peptidyl-alanyl moieties that are N-acyl substituents of D-alanine.. The protein operates within cell wall biogenesis; peptidoglycan biosynthesis. In terms of biological role, cell wall formation. Synthesis of cross-linked peptidoglycan from the lipid intermediates. The enzyme has a penicillin-insensitive transglycosylase N-terminal domain (formation of linear glycan strands) and a penicillin-sensitive transpeptidase C-terminal domain (cross-linking of the peptide subunits). This Buchnera aphidicola subsp. Baizongia pistaciae (strain Bp) protein is Penicillin-binding protein 1B (mrcB).